Reading from the N-terminus, the 450-residue chain is Phosphoglucosamine mutase (450 aa).

Residue S101 is the Phosphoserine intermediate of the active site. Mg(2+) is bound by residues S101, D242, D244, and D246. The residue at position 101 (S101) is a Phosphoserine.

It belongs to the phosphohexose mutase family. Requires Mg(2+) as cofactor. Activated by phosphorylation.

It catalyses the reaction alpha-D-glucosamine 1-phosphate = D-glucosamine 6-phosphate. Functionally, catalyzes the conversion of glucosamine-6-phosphate to glucosamine-1-phosphate. The chain is Phosphoglucosamine mutase from Rhodopseudomonas palustris (strain HaA2).